The primary structure comprises 378 residues: 3-dehydroquinate synthase (378 aa).

NAD(+)-binding positions include 115–119, 139–140, K152, and K161; these read GVVGD and TS. Residues E194, H256, and H275 each coordinate Zn(2+).

It belongs to the sugar phosphate cyclases superfamily. Dehydroquinate synthase family. It depends on Co(2+) as a cofactor. The cofactor is Zn(2+). NAD(+) serves as cofactor.

The protein resides in the cytoplasm. The catalysed reaction is 7-phospho-2-dehydro-3-deoxy-D-arabino-heptonate = 3-dehydroquinate + phosphate. It participates in metabolic intermediate biosynthesis; chorismate biosynthesis; chorismate from D-erythrose 4-phosphate and phosphoenolpyruvate: step 2/7. Functionally, catalyzes the conversion of 3-deoxy-D-arabino-heptulosonate 7-phosphate (DAHP) to dehydroquinate (DHQ). The chain is 3-dehydroquinate synthase from Brucella canis (strain ATCC 23365 / NCTC 10854 / RM-666).